The chain runs to 378 residues: Ferrochelatase (378 aa).

Fe cation-binding residues include histidine 214 and glutamate 295.

It belongs to the ferrochelatase family.

It localises to the cytoplasm. The catalysed reaction is heme b + 2 H(+) = protoporphyrin IX + Fe(2+). The protein operates within porphyrin-containing compound metabolism; protoheme biosynthesis; protoheme from protoporphyrin-IX: step 1/1. In terms of biological role, catalyzes the ferrous insertion into protoporphyrin IX. This is Ferrochelatase from Hydrogenovibrio crunogenus (strain DSM 25203 / XCL-2) (Thiomicrospira crunogena).